Here is a 333-residue protein sequence, read N- to C-terminus: tRNA N6-adenosine threonylcarbamoyltransferase (333 aa).

The Fe cation site is built by H108 and H112. Residues L129–G133, D161, E178, and S258 contribute to the substrate site. D286 provides a ligand contact to Fe cation.

Belongs to the KAE1 / TsaD family. It depends on Fe(2+) as a cofactor.

It localises to the cytoplasm. It carries out the reaction L-threonylcarbamoyladenylate + adenosine(37) in tRNA = N(6)-L-threonylcarbamoyladenosine(37) in tRNA + AMP + H(+). In terms of biological role, required for the formation of a threonylcarbamoyl group on adenosine at position 37 (t(6)A37) in tRNAs that read codons beginning with adenine. Is probably involved in the transfer of the threonylcarbamoyl moiety of threonylcarbamoyl-AMP (TC-AMP) to the N6 group of A37. This Pyrobaculum islandicum (strain DSM 4184 / JCM 9189 / GEO3) protein is tRNA N6-adenosine threonylcarbamoyltransferase.